Here is a 223-residue protein sequence, read N- to C-terminus: Ribonuclease T (223 aa).

An Exonuclease domain is found at 20–195 (VVIDVETAGF…YDTERTAELF (176 aa)). Mg(2+) is bound by residues Asp23, Glu25, His182, and Asp187. His182 (proton donor/acceptor) is an active-site residue.

This sequence belongs to the RNase T family. In terms of assembly, homodimer. Mg(2+) is required as a cofactor.

In terms of biological role, trims short 3' overhangs of a variety of RNA species, leaving a one or two nucleotide 3' overhang. Responsible for the end-turnover of tRNA: specifically removes the terminal AMP residue from uncharged tRNA (tRNA-C-C-A). Also appears to be involved in tRNA biosynthesis. The sequence is that of Ribonuclease T from Photobacterium profundum (strain SS9).